Reading from the N-terminus, the 505-residue chain is Maturase K (505 aa).

The protein belongs to the intron maturase 2 family. MatK subfamily.

The protein resides in the plastid. It localises to the chloroplast. In terms of biological role, usually encoded in the trnK tRNA gene intron. Probably assists in splicing its own and other chloroplast group II introns. The chain is Maturase K from Gomphrena haageana (Haage's globe-amaranth).